The sequence spans 178 residues: Large ribosomal subunit protein bL25 (178 aa).

Belongs to the bacterial ribosomal protein bL25 family. CTC subfamily. Part of the 50S ribosomal subunit; part of the 5S rRNA/L5/L18/L25 subcomplex. Contacts the 5S rRNA. Binds to the 5S rRNA independently of L5 and L18.

Functionally, this is one of the proteins that binds to the 5S RNA in the ribosome where it forms part of the central protuberance. The sequence is that of Large ribosomal subunit protein bL25 from Campylobacter jejuni subsp. jejuni serotype O:23/36 (strain 81-176).